A 481-amino-acid chain; its full sequence is Betaine aldehyde dehydrogenase 2 (481 aa).

K(+) contacts are provided by S29 and D96. An NAD(+)-binding site is contributed by 152-154 (GAW). The active-site Charge relay system is the K164. Position 178–181 (178–181 (KPSE)) interacts with NAD(+). Position 182 (V182) interacts with K(+). 231 to 234 (SVKT) contacts NAD(+). Residue I246 coordinates K(+). The active-site Proton acceptor is the E252. Residues G254, C286, and E383 each contribute to the NAD(+) site. The active-site Nucleophile is C286. C286 is modified (cysteine sulfenic acid (-SOH)). The K(+) site is built by K453 and G456. Residue E460 is the Charge relay system of the active site.

It belongs to the aldehyde dehydrogenase family. As to quaternary structure, dimer of dimers. Requires K(+) as cofactor.

It catalyses the reaction betaine aldehyde + NAD(+) + H2O = glycine betaine + NADH + 2 H(+). The protein operates within amine and polyamine biosynthesis; betaine biosynthesis via choline pathway; betaine from betaine aldehyde: step 1/1. In terms of biological role, involved in the biosynthesis of the osmoprotectant glycine betaine. Catalyzes the irreversible oxidation of betaine aldehyde to the corresponding acid. The protein is Betaine aldehyde dehydrogenase 2 of Rhizobium meliloti (strain 1021) (Ensifer meliloti).